Here is a 490-residue protein sequence, read N- to C-terminus: GTPase Der (490 aa).

2 EngA-type G domains span residues 3–166 and 200–373; these read PVVA…AEAM and IKLA…DSAT. GTP-binding positions include 9-16, 56-60, 118-121, 206-213, 253-257, and 318-321; these read GRPNVGKS, DTGGI, NKVD, GKPNVGKS, DTAGV, and NKWD. The 85-residue stretch at 374–458 folds into the KH-like domain; the sequence is RRVSTSMLTR…PIQLRFQEGG (85 aa). Residues 470 to 490 are disordered; it reads TVSQERRRKRMVGHIRDKNKD.

This sequence belongs to the TRAFAC class TrmE-Era-EngA-EngB-Septin-like GTPase superfamily. EngA (Der) GTPase family. Associates with the 50S ribosomal subunit.

GTPase that plays an essential role in the late steps of ribosome biogenesis. The protein is GTPase Der of Shewanella pealeana (strain ATCC 700345 / ANG-SQ1).